We begin with the raw amino-acid sequence, 491 residues long: Chromosomal replication initiator protein DnaA (491 aa).

The domain I, interacts with DnaA modulators stretch occupies residues 1–86 (MTDELNSQFT…VEALSRRLGE (86 aa)). Residues 86 to 150 (ENVELGVRIA…GADKAETPDT (65 aa)) are domain II. The domain III, AAA+ region stretch occupies residues 151 to 367 (SLNARYTFES…GALIRVTAFA (217 aa)). 4 residues coordinate ATP: glycine 195, glycine 197, lysine 198, and threonine 199. Residues 368–491 (SLNKSPIELS…TARIRQRSRH (124 aa)) are domain IV, binds dsDNA.

The protein belongs to the DnaA family. As to quaternary structure, oligomerizes as a right-handed, spiral filament on DNA at oriC.

The protein localises to the cytoplasm. Its function is as follows. Plays an essential role in the initiation and regulation of chromosomal replication. ATP-DnaA binds to the origin of replication (oriC) to initiate formation of the DNA replication initiation complex once per cell cycle. Binds the DnaA box (a 9 base pair repeat at the origin) and separates the double-stranded (ds)DNA. Forms a right-handed helical filament on oriC DNA; dsDNA binds to the exterior of the filament while single-stranded (ss)DNA is stabiized in the filament's interior. The ATP-DnaA-oriC complex binds and stabilizes one strand of the AT-rich DNA unwinding element (DUE), permitting loading of DNA polymerase. After initiation quickly degrades to an ADP-DnaA complex that is not apt for DNA replication. Binds acidic phospholipids. The sequence is that of Chromosomal replication initiator protein DnaA from Mycobacteroides abscessus (strain ATCC 19977 / DSM 44196 / CCUG 20993 / CIP 104536 / JCM 13569 / NCTC 13031 / TMC 1543 / L948) (Mycobacterium abscessus).